The primary structure comprises 428 residues: Putative F-box protein At3g22421 (428 aa).

The 47-residue stretch at 4–50 (TTTISHLPTELLDEIISRVPLKSTRAVRLTCKNWDSLFKNRSFMKEE) folds into the F-box domain.

This chain is Putative F-box protein At3g22421, found in Arabidopsis thaliana (Mouse-ear cress).